Consider the following 164-residue polypeptide: Thiol peroxidase (164 aa).

Residues 18 to 163 (INEGDFAPDF…FDAALAAYKN (146 aa)) form the Thioredoxin domain. C60 functions as the Cysteine sulfenic acid (-SOH) intermediate in the catalytic mechanism. An intrachain disulfide couples C60 to C93.

It belongs to the peroxiredoxin family. Tpx subfamily. In terms of assembly, homodimer.

The catalysed reaction is a hydroperoxide + [thioredoxin]-dithiol = an alcohol + [thioredoxin]-disulfide + H2O. Thiol-specific peroxidase that catalyzes the reduction of hydrogen peroxide and organic hydroperoxides to water and alcohols, respectively. Plays a role in cell protection against oxidative stress by detoxifying peroxides. The sequence is that of Thiol peroxidase from Staphylococcus aureus (strain Mu50 / ATCC 700699).